The following is a 341-amino-acid chain: Mitochondrial transcription factor 1 (341 aa).

S-adenosyl-L-methionine contacts are provided by Leu23, Glu77, Asp101, and Asn137.

Belongs to the class I-like SAM-binding methyltransferase superfamily. rRNA adenine N(6)-methyltransferase family.

The protein resides in the mitochondrion. Functionally, mitochondrial transcription factor that confers selective promoter recognition on the core subunit of the yeast mitochondrial RNA polymerase. Interacts with DNA in a non-specific manner. This chain is Mitochondrial transcription factor 1 (MTF1), found in Saccharomyces paradoxus (Yeast).